Reading from the N-terminus, the 177-residue chain is ATP synthase subunit delta (177 aa).

It belongs to the ATPase delta chain family. As to quaternary structure, F-type ATPases have 2 components, F(1) - the catalytic core - and F(0) - the membrane proton channel. F(1) has five subunits: alpha(3), beta(3), gamma(1), delta(1), epsilon(1). F(0) has three main subunits: a(1), b(2) and c(10-14). The alpha and beta chains form an alternating ring which encloses part of the gamma chain. F(1) is attached to F(0) by a central stalk formed by the gamma and epsilon chains, while a peripheral stalk is formed by the delta and b chains.

The protein localises to the cell inner membrane. In terms of biological role, f(1)F(0) ATP synthase produces ATP from ADP in the presence of a proton or sodium gradient. F-type ATPases consist of two structural domains, F(1) containing the extramembraneous catalytic core and F(0) containing the membrane proton channel, linked together by a central stalk and a peripheral stalk. During catalysis, ATP synthesis in the catalytic domain of F(1) is coupled via a rotary mechanism of the central stalk subunits to proton translocation. Functionally, this protein is part of the stalk that links CF(0) to CF(1). It either transmits conformational changes from CF(0) to CF(1) or is implicated in proton conduction. This chain is ATP synthase subunit delta, found in Shewanella baltica (strain OS223).